The primary structure comprises 962 residues: Exportin-T (962 aa).

Position 1 is an N-acetylmethionine (M1). A necessary for interaction with Ran, nuclear localization and nuclear import region spans residues 1-385 (MDEQALLGLN…MLAVMKKLTY (385 aa)). A necessary for tRNA-binding, cytoplasmic localization and nuclear export region spans residues 443–962 (FMEVEVAIRL…LKVFFQRAKP (520 aa)). K634 carries the N6-acetyllysine modification.

It belongs to the exportin family. As to quaternary structure, found in a complex with XPOT, Ran and tRNA. Probably found in a complex with nucleoporins. Interacts with Ran and tRNA in a GTP-dependent manner.

Its subcellular location is the nucleus. The protein localises to the cytoplasm. Functionally, mediates the nuclear export of aminoacylated tRNAs. In the nucleus binds to tRNA and to the GTPase Ran in its active GTP-bound form. Docking of this trimeric complex to the nuclear pore complex (NPC) is mediated through binding to nucleoporins. Upon transit of a nuclear export complex into the cytoplasm, disassembling of the complex and hydrolysis of Ran-GTP to Ran-GDP (induced by RANBP1 and RANGAP1, respectively) cause release of the tRNA from the export receptor. XPOT then return to the nuclear compartment and mediate another round of transport. The directionality of nuclear export is thought to be conferred by an asymmetric distribution of the GTP- and GDP-bound forms of Ran between the cytoplasm and nucleus. In Homo sapiens (Human), this protein is Exportin-T (XPOT).